Consider the following 156-residue polypeptide: SCP2 sterol-binding domain-containing protein 1 (156 aa).

One can recognise an SCP2 domain in the interval 44–156 (SFPVFQDIRL…ERVFKDWAKF (113 aa)).

This chain is SCP2 sterol-binding domain-containing protein 1 (SCP2D1), found in Homo sapiens (Human).